The chain runs to 627 residues: MAAASPTAHDVYLFHEGSLFKSYQLFGSHYRELNGKSGYEFCVWAPHASEVRVAGDFNSWSGEEHVMHRVNDNGIWTLFIPGIGEKERYKYEIVTNNGEIRLKADPYAIYSEVRPNTASLTYDLEGYSWQDQKWQKKQKAKTLYEKPVFIYELHLGSWKKHSDGRHYSYKELSQTLIPYIKKHGFTHIELLPVYEHPYDRSWGYQGTGYYSPTSRFGPPHDLMKFVDECHQQNIGVILDWVPGHFCKDAHGLYMFDGEPLYEYKEERDRENWLWGTANFDLGKPEVHSFLISNALYWAEFYHIDGFRVDAVANILYWPNQDERHTNPYAVDFLKKLNQTMREAYPHVMMIAEDSTEWPQVTGAVEEGGLGFHYKWNMGWMNDVLKYMETPPEERRHCHQLISFSLLYAFSEHFVLPFSHDEVVYGKKSLLNKMPGDYWQKFAQYRLLLGYMTVHPGKKLIFMGSEFAQFDEWKDTEQLDWFLDSFPMHQKASVFTQDLLRFYQKSKILYEHDHRAQSFEWIDVHNDEQSIFSFIRYGQKHGEALVIICNFTPVVYHQYDVGVPFFTQYIEVLNSDSETYGGSGQINKKPLSAKKGALHHKPCYITMTIPPYGISILRAVKKRGEIKR.

The Nucleophile role is filled by Asp309. The Proton donor role is filled by Glu352.

It belongs to the glycosyl hydrolase 13 family. GlgB subfamily. Monomer.

It catalyses the reaction Transfers a segment of a (1-&gt;4)-alpha-D-glucan chain to a primary hydroxy group in a similar glucan chain.. It functions in the pathway glycan biosynthesis; glycogen biosynthesis. Its function is as follows. Catalyzes the formation of the alpha-1,6-glucosidic linkages in glycogen by scission of a 1,4-alpha-linked oligosaccharide from growing alpha-1,4-glucan chains and the subsequent attachment of the oligosaccharide to the alpha-1,6 position. In Bacillus subtilis (strain 168), this protein is 1,4-alpha-glucan branching enzyme GlgB (glgB).